Reading from the N-terminus, the 126-residue chain is Small ribosomal subunit protein uS12 (126 aa).

The residue at position 89 (Asp-89) is a 3-methylthioaspartic acid.

The protein belongs to the universal ribosomal protein uS12 family. Part of the 30S ribosomal subunit. Contacts proteins S8 and S17. May interact with IF1 in the 30S initiation complex.

In terms of biological role, with S4 and S5 plays an important role in translational accuracy. Interacts with and stabilizes bases of the 16S rRNA that are involved in tRNA selection in the A site and with the mRNA backbone. Located at the interface of the 30S and 50S subunits, it traverses the body of the 30S subunit contacting proteins on the other side and probably holding the rRNA structure together. The combined cluster of proteins S8, S12 and S17 appears to hold together the shoulder and platform of the 30S subunit. This Sulfurimonas denitrificans (strain ATCC 33889 / DSM 1251) (Thiomicrospira denitrificans (strain ATCC 33889 / DSM 1251)) protein is Small ribosomal subunit protein uS12.